Consider the following 645-residue polypeptide: Mediator of RNA polymerase II transcription subunit 17 (645 aa).

The disordered stretch occupies residues 215-234; it reads KAEDEESGSPPASPSGSGAA. Positions 222-234 are enriched in low complexity; that stretch reads GSPPASPSGSGAA.

It belongs to the Mediator complex subunit 17 family. In terms of assembly, component of the Mediator complex.

Its subcellular location is the nucleus. In terms of biological role, component of the Mediator complex, a coactivator involved in the regulated transcription of nearly all RNA polymerase II-dependent genes. Mediator functions as a bridge to convey information from gene-specific regulatory proteins to the basal RNA polymerase II transcription machinery. Mediator is recruited to promoters by direct interactions with regulatory proteins and serves as a scaffold for the assembly of a functional preinitiation complex with RNA polymerase II and the general transcription factors. This is Mediator of RNA polymerase II transcription subunit 17 (MED17) from Anopheles gambiae (African malaria mosquito).